Consider the following 479-residue polypeptide: NADH oxidase (479 aa).

Residues 8 to 12, aspartate 33, cysteine 43, valine 80, 111 to 114, lysine 149, and tyrosine 177 contribute to the FAD site; these read GVNHA and ASGA. The active-site Proton acceptor is histidine 11. Catalysis depends on cysteine 43, which acts as the Redox-active. Cysteine 43 is subject to Cysteine sulfinic acid (-SO2H). Residues 170–185, aspartate 197, and glycine 264 each bind NAD(+); that span reads VAIV…LAEA. FAD-binding positions include 295–305, leucine 322, alanine 323, and threonine 324; that span reads LNHENVYVIGG. Alanine 353 serves as a coordination point for NAD(+). Phenylalanine 450 serves as a coordination point for FAD.

This sequence belongs to the class-III pyridine nucleotide-disulfide oxidoreductase family. FAD is required as a cofactor.

It carries out the reaction 2 NADH + O2 + 2 H(+) = 2 NAD(+) + 2 H2O. Its function is as follows. Catalyzes the four-electron reduction of molecular oxygen to water. The chain is NADH oxidase (nox) from Mycoplasma pneumoniae (strain ATCC 29342 / M129 / Subtype 1) (Mycoplasmoides pneumoniae).